The following is an 86-amino-acid chain: UPF0125 protein bbp_234 (86 aa).

It belongs to the UPF0125 (RnfH) family.

This is UPF0125 protein bbp_234 from Buchnera aphidicola subsp. Baizongia pistaciae (strain Bp).